The chain runs to 241 residues: 1-(5-phosphoribosyl)-5-[(5-phosphoribosylamino)methylideneamino] imidazole-4-carboxamide isomerase (241 aa).

Residue Asp10 is the Proton acceptor of the active site. Asp131 functions as the Proton donor in the catalytic mechanism.

The protein belongs to the HisA/HisF family.

Its subcellular location is the cytoplasm. It carries out the reaction 1-(5-phospho-beta-D-ribosyl)-5-[(5-phospho-beta-D-ribosylamino)methylideneamino]imidazole-4-carboxamide = 5-[(5-phospho-1-deoxy-D-ribulos-1-ylimino)methylamino]-1-(5-phospho-beta-D-ribosyl)imidazole-4-carboxamide. It participates in amino-acid biosynthesis; L-histidine biosynthesis; L-histidine from 5-phospho-alpha-D-ribose 1-diphosphate: step 4/9. The protein is 1-(5-phosphoribosyl)-5-[(5-phosphoribosylamino)methylideneamino] imidazole-4-carboxamide isomerase of Hyphomonas neptunium (strain ATCC 15444).